A 255-amino-acid polypeptide reads, in one-letter code: Urease accessory protein UreD 1 (255 aa).

Belongs to the UreD family. As to quaternary structure, ureD, UreF and UreG form a complex that acts as a GTP-hydrolysis-dependent molecular chaperone, activating the urease apoprotein by helping to assemble the nickel containing metallocenter of UreC. The UreE protein probably delivers the nickel.

It localises to the cytoplasm. In terms of biological role, required for maturation of urease via the functional incorporation of the urease nickel metallocenter. This Streptomyces griseus subsp. griseus (strain JCM 4626 / CBS 651.72 / NBRC 13350 / KCC S-0626 / ISP 5235) protein is Urease accessory protein UreD 1.